A 506-amino-acid polypeptide reads, in one-letter code: Maturase K (506 aa).

The protein belongs to the intron maturase 2 family. MatK subfamily.

The protein localises to the plastid. It localises to the chloroplast. Its function is as follows. Usually encoded in the trnK tRNA gene intron. Probably assists in splicing its own and other chloroplast group II introns. This chain is Maturase K, found in Crataegus monogyna (Hawthorn).